The primary structure comprises 438 residues: 3-phosphoshikimate 1-carboxyvinyltransferase (438 aa).

3-phosphoshikimate contacts are provided by lysine 21, serine 22, and arginine 26. Lysine 21 provides a ligand contact to phosphoenolpyruvate. Glycine 95 and arginine 123 together coordinate phosphoenolpyruvate. Residues serine 167, glutamine 169, aspartate 315, and lysine 342 each coordinate 3-phosphoshikimate. A phosphoenolpyruvate-binding site is contributed by glutamine 169. The active-site Proton acceptor is aspartate 315. The phosphoenolpyruvate site is built by arginine 346 and arginine 387.

Belongs to the EPSP synthase family. In terms of assembly, monomer.

The protein localises to the cytoplasm. The enzyme catalyses 3-phosphoshikimate + phosphoenolpyruvate = 5-O-(1-carboxyvinyl)-3-phosphoshikimate + phosphate. It participates in metabolic intermediate biosynthesis; chorismate biosynthesis; chorismate from D-erythrose 4-phosphate and phosphoenolpyruvate: step 6/7. Functionally, catalyzes the transfer of the enolpyruvyl moiety of phosphoenolpyruvate (PEP) to the 5-hydroxyl of shikimate-3-phosphate (S3P) to produce enolpyruvyl shikimate-3-phosphate and inorganic phosphate. The sequence is that of 3-phosphoshikimate 1-carboxyvinyltransferase from Coxiella burnetii (strain CbuK_Q154) (Coxiella burnetii (strain Q154)).